Here is a 231-residue protein sequence, read N- to C-terminus: Octanoyltransferase (231 aa).

Residues 29–231 (PQDPDLLWLC…GRQLCIWLAP (203 aa)) form the BPL/LPL catalytic domain. Residues 68–75 (RGGQVTFH), 164–166 (ALG), and 177–179 (GVA) each bind substrate. The active-site Acyl-thioester intermediate is Cys-195.

Belongs to the LipB family.

The protein localises to the cytoplasm. It catalyses the reaction octanoyl-[ACP] + L-lysyl-[protein] = N(6)-octanoyl-L-lysyl-[protein] + holo-[ACP] + H(+). Its pathway is protein modification; protein lipoylation via endogenous pathway; protein N(6)-(lipoyl)lysine from octanoyl-[acyl-carrier-protein]: step 1/2. Its function is as follows. Catalyzes the transfer of endogenously produced octanoic acid from octanoyl-acyl-carrier-protein onto the lipoyl domains of lipoate-dependent enzymes. Lipoyl-ACP can also act as a substrate although octanoyl-ACP is likely to be the physiological substrate. The chain is Octanoyltransferase from Verminephrobacter eiseniae (strain EF01-2).